The following is a 451-amino-acid chain: Plasmepsin III (451 aa).

Residues 1–37 (MNLTIKEEDFTNTFMKNEESFNTFRVTKVKRWNAKRL) are Cytoplasmic-facing. Positions 1-123 (MNLTIKEEDF…KGLTKKSYLG (123 aa)) are excised as a propeptide. A helical; Signal-anchor for type II membrane protein membrane pass occupies residues 38-58 (FKILFVTVFIVLAGGFSYYIF). Topologically, residues 59 to 451 (ENFVFQKNRK…TVGFALAKNL (393 aa)) are lumenal. Residues 139–446 (SFGEAKLGDN…DYDNHTVGFA (308 aa)) form the Peptidase A1 domain. 2 disulfides stabilise this stretch: Cys-170–Cys-175 and Cys-372–Cys-408.

Belongs to the peptidase A1 family. As to quaternary structure, probable homodimer; in the zymogen form. Monomer; in the active form. Acidification disrupts homodimerization. Component of the hemozoin formation complex (HFC) composed of falcipains FP2A and/or FP2B, plasmepsins PMII, PMIII/HAP and PMIV, heme detoxifying protein HDP and falcilysin FLN. The HFC complex is involved in hemoglobin degradation and detoxification of heme in the food vacuole during the asexual blood stage. In terms of processing, proteolytically cleaved into the soluble active mature form by cysteine proteases in the digestive vacuole of trophozoites. Proteolysis requires an acidic environment. Transprocessing may serve as an alternate activation system.

The protein resides in the membrane. It is found in the vacuole lumen. The catalysed reaction is Hydrolysis of the bonds linking certain hydrophobic residues in hemoglobin or globin. Also cleaves small molecules substrates such as Ala-Leu-Glu-Arg-Thr-Phe-|-Phe(NO2)-Ser-Phe-Pro-Thr.. Its activity is regulated as follows. Dimerization causes loss of catalytic activity. Inhibited by pepstatin A. Inhibited by Zn(2+). In terms of biological role, during the asexual blood stage, catalyzes the cleavage of denatured host hemoglobin (Hb) or globins. Digestion of host Hb is an essential step which provides the parasite with amino acids for protein synthesis, and regulates osmolarity. This chain is Plasmepsin III, found in Plasmodium falciparum (isolate 3D7).